We begin with the raw amino-acid sequence, 599 residues long: Aspartate--tRNA ligase (599 aa).

Glu175 lines the L-aspartate pocket. The segment at 199-202 is aspartate; that stretch reads QQFK. Positions 221 and 446 each coordinate L-aspartate. 221–223 contributes to the ATP binding site; it reads RDE. Glu480 provides a ligand contact to ATP. Arg487 contacts L-aspartate. Position 532–535 (532–535) interacts with ATP; sequence GVDR.

This sequence belongs to the class-II aminoacyl-tRNA synthetase family. Type 1 subfamily. As to quaternary structure, homodimer.

The protein resides in the cytoplasm. The catalysed reaction is tRNA(Asp) + L-aspartate + ATP = L-aspartyl-tRNA(Asp) + AMP + diphosphate. Its function is as follows. Catalyzes the attachment of L-aspartate to tRNA(Asp) in a two-step reaction: L-aspartate is first activated by ATP to form Asp-AMP and then transferred to the acceptor end of tRNA(Asp). This Streptomyces griseus subsp. griseus (strain JCM 4626 / CBS 651.72 / NBRC 13350 / KCC S-0626 / ISP 5235) protein is Aspartate--tRNA ligase.